A 288-amino-acid chain; its full sequence is Protoheme IX farnesyltransferase 2 (288 aa).

9 helical membrane passes run 8-28 (ITKP…FFLA), 36-56 (LMLF…GCVV), 85-105 (VAFV…FQLV), 108-128 (LSAV…TMWY), 131-151 (NSVY…LVGY), 152-172 (LAVT…FCLW), 211-231 (AYVV…EAGY), 233-252 (YLAV…FRSI), and 267-287 (VSLL…IPLA).

Belongs to the UbiA prenyltransferase family. Protoheme IX farnesyltransferase subfamily.

It is found in the cell inner membrane. It carries out the reaction heme b + (2E,6E)-farnesyl diphosphate + H2O = Fe(II)-heme o + diphosphate. The protein operates within porphyrin-containing compound metabolism; heme O biosynthesis; heme O from protoheme: step 1/1. In terms of biological role, converts heme B (protoheme IX) to heme O by substitution of the vinyl group on carbon 2 of heme B porphyrin ring with a hydroxyethyl farnesyl side group. The polypeptide is Protoheme IX farnesyltransferase 2 (Vibrio parahaemolyticus serotype O3:K6 (strain RIMD 2210633)).